A 68-amino-acid chain; its full sequence is Guanine nucleotide-binding protein G(I)/G(S)/G(O) subunit gamma-5 (68 aa).

Ser2 carries the post-translational modification N-acetylserine. Ser2 carries the post-translational modification Phosphoserine. Cys65 is subject to Cysteine methyl ester. A lipid anchor (S-geranylgeranyl cysteine) is attached at Cys65. A propeptide spans 66–68 (removed in mature form); it reads SFL.

Belongs to the G protein gamma family. As to quaternary structure, g proteins are composed of 3 units, alpha, beta and gamma. Expressed in a variety of tissues.

It localises to the cell membrane. Functionally, guanine nucleotide-binding proteins (G proteins) are involved as a modulator or transducer in various transmembrane signaling systems. The beta and gamma chains are required for the GTPase activity, for replacement of GDP by GTP, and for G protein-effector interaction. The chain is Guanine nucleotide-binding protein G(I)/G(S)/G(O) subunit gamma-5 (GNG5) from Bos taurus (Bovine).